Here is a 152-residue protein sequence, read N- to C-terminus: MANSERTFIAIKPDGVQRGLVGEIIKRFEQKGFRLVGLKFIQASEDLLKEHYIDLKDRPFFSGLVKYMHSGPVVAMVWEGLNVVKTGRVMLGETNPADSKPGTIRGDFCIQVGRNIIHGSDSVESAEKEISLWFQPEELVDYKSCAQNWIYE.

4 residues coordinate ATP: lysine 12, phenylalanine 60, arginine 88, and threonine 94. Residue lysine 100 forms a Glycyl lysine isopeptide (Lys-Gly) (interchain with G-Cter in ubiquitin) linkage. ATP-binding residues include arginine 105 and asparagine 115. The active-site Pros-phosphohistidine intermediate is the histidine 118. Residues serine 120, serine 122, and serine 125 each carry the phosphoserine modification.

The protein belongs to the NDK family. In terms of assembly, hexamer of two different chains: An and B (A6, A5B, A4B2, A3B3, A2B4, AB5, B6). Interacts with PRUNE1. Component of the SET complex, composed of at least ANP32A, APEX1, HMGB2, NME1, SET and TREX1. Within this complex, interacts directly with SET. Also interacts with TREX1, but only following translocation to the nucleus. Requires Mg(2+) as cofactor.

It is found in the cytoplasm. Its subcellular location is the nucleus. The enzyme catalyses a 2'-deoxyribonucleoside 5'-diphosphate + ATP = a 2'-deoxyribonucleoside 5'-triphosphate + ADP. The catalysed reaction is a ribonucleoside 5'-diphosphate + ATP = a ribonucleoside 5'-triphosphate + ADP. Autophosphorylation at His-118 increases serine/threonine protein kinase activity of the enzyme. Interaction with the SET complex inhibits exonuclease activity. Functionally, major role in the synthesis of nucleoside triphosphates other than ATP. The ATP gamma phosphate is transferred to the NDP beta phosphate via a ping-pong mechanism, using a phosphorylated active-site intermediate. Possesses nucleoside-diphosphate kinase, serine/threonine-specific protein kinase, geranyl and farnesyl pyrophosphate kinase, histidine protein kinase and 3'-5' exonuclease activities. Involved in cell proliferation, differentiation and development, signal transduction, G protein-coupled receptor endocytosis, and gene expression. Required for neural development including neural patterning and cell fate determination. During GZMA-mediated cell death, works in concert with TREX1. NME1 nicks one strand of DNA and TREX1 removes bases from the free 3' end to enhance DNA damage and prevent DNA end reannealing and rapid repair. The protein is Nucleoside diphosphate kinase A (Nme1) of Rattus norvegicus (Rat).